Here is a 184-residue protein sequence, read N- to C-terminus: Thymidine kinase (184 aa).

ATP contacts are provided by residues 15–22 (GPMFSGKS) and 89–92 (DEIQ). The active-site Proton acceptor is glutamate 90. Cysteine 146, cysteine 149, cysteine 178, and cysteine 181 together coordinate Zn(2+).

It belongs to the thymidine kinase family. In terms of assembly, homotetramer.

It is found in the cytoplasm. It catalyses the reaction thymidine + ATP = dTMP + ADP + H(+). The sequence is that of Thymidine kinase from Mesomycoplasma hyopneumoniae (strain 232) (Mycoplasma hyopneumoniae).